The primary structure comprises 370 residues: MTRGLAPLLPIEFHKMGSFRRPRPRFMSSPLLSELPRFQAARQALQLSSNSAWNSVQTAVINVFKGGGLQSNELYALNESIRRLLKSELGSFITDYFQNQLLAKGLSFVEEKIKQCEGDNRIEVLAEVWDHFFTETLPTLQAIFYPVQGQELTIRQISLLGFRDLVLLKVKLGDLLLLSQSKLPSSVIQMLLILQSVHEPTGPSEGYLQLEELVKQVVSPFLGLSGDRSCSRPTHSLARRHSRVRPKVTVLNYASLMTTVGRPLNEMVLTPLTEQEGEAYLEKCGSVRRHTVANAHSDIQLLAMATMMHSGLGEESGSEDKHLLLPPTFPPPHRQCSSEPSILDSPDEMELEDVASGSQEDSELNCASLS.

Phosphoserine is present on Ser-28. The tract at residues 327-370 (PTFPPPHRQCSSEPSILDSPDEMELEDVASGSQEDSELNCASLS) is disordered.

It belongs to the PROTOR family. As to quaternary structure, interacts with the mammalian target of rapamycin complex 2 (mTORC2) which contains MTOR, MLST8, PRR5, RICTOR, MAPKAP1 and DEPTOR. Interacts with RFFL. Interacts (via C-terminus) with ZFP36 (via C-terminus); this interaction may accelerate ZFP36-mediated mRNA decay during stress. Interacts with RICTOR. Ubiquitinated. Ubiquitination by RFFL promotes proteasomal degradation of PRR5L thereby modifying the substrate-specific activity of the mTORC2 complex. Ubiquitination by RFFL is stimulated by LPA/lysophosphatidic acid.

In terms of biological role, associates with the mTORC2 complex that regulates cellular processes including survival and organization of the cytoskeleton. Regulates the activity of the mTORC2 complex in a substrate-specific manner preventing for instance the specific phosphorylation of PKCs and thereby controlling cell migration. Plays a role in the stimulation of ZFP36-mediated mRNA decay of several ZFP36-associated mRNAs, such as TNF-alpha and GM-CSF, in response to stress. Required for ZFP36 localization to cytoplasmic stress granule (SG) and P-body (PB) in response to stress. This Rattus norvegicus (Rat) protein is Proline-rich protein 5-like (Prr5l).